Reading from the N-terminus, the 183-residue chain is ATP synthase subunit delta (183 aa).

It belongs to the ATPase delta chain family. F-type ATPases have 2 components, F(1) - the catalytic core - and F(0) - the membrane proton channel. F(1) has five subunits: alpha(3), beta(3), gamma(1), delta(1), epsilon(1). CF(0) has four main subunits: a(1), b(1), b'(1) and c(10-14). The alpha and beta chains form an alternating ring which encloses part of the gamma chain. F(1) is attached to F(0) by a central stalk formed by the gamma and epsilon chains, while a peripheral stalk is formed by the delta, b and b' chains.

The protein localises to the cellular thylakoid membrane. Functionally, f(1)F(0) ATP synthase produces ATP from ADP in the presence of a proton or sodium gradient. F-type ATPases consist of two structural domains, F(1) containing the extramembraneous catalytic core and F(0) containing the membrane proton channel, linked together by a central stalk and a peripheral stalk. During catalysis, ATP synthesis in the catalytic domain of F(1) is coupled via a rotary mechanism of the central stalk subunits to proton translocation. In terms of biological role, this protein is part of the stalk that links CF(0) to CF(1). It either transmits conformational changes from CF(0) to CF(1) or is implicated in proton conduction. The polypeptide is ATP synthase subunit delta (Prochlorococcus marinus (strain SARG / CCMP1375 / SS120)).